The following is a 340-amino-acid chain: Chitinase 2 (340 aa).

An N-terminal signal peptide occupies residues 1–32 (MSTPRAAASLAKKAALVALAVLAAALATAARA). The Chitin-binding type-1 domain occupies 33–73 (EQCGAQAGGARCPNCLCCSRWGWCGTTSDFCGDGCQSQCSG). 8 disulfide bridges follow: cysteine 35–cysteine 50, cysteine 44–cysteine 56, cysteine 47–cysteine 74, cysteine 49–cysteine 63, cysteine 67–cysteine 71, cysteine 110–cysteine 172, cysteine 184–cysteine 192, and cysteine 291–cysteine 323. Residue glutamate 154 is the Proton donor of the active site.

The protein belongs to the glycosyl hydrolase 19 family. Chitinase class I subfamily. In terms of tissue distribution, expressed in roots, sheaths and meristems.

The catalysed reaction is Random endo-hydrolysis of N-acetyl-beta-D-glucosaminide (1-&gt;4)-beta-linkages in chitin and chitodextrins.. Functionally, hydrolyzes chitin and plays a role in defense against fungal pathogens containing chitin. Its overexpression confers enhanced resistance to sheath blight pathogen (R.solani). This is Chitinase 2 (Cht2) from Oryza sativa subsp. japonica (Rice).